The sequence spans 492 residues: 3-octaprenyl-4-hydroxybenzoate carboxy-lyase (492 aa).

Residue Asn-177 coordinates Mn(2+). Residues 180 to 182 (IYR), 194 to 196 (RWL), and 199 to 200 (RG) contribute to the prenylated FMN site. Glu-243 contributes to the Mn(2+) binding site. Catalysis depends on Asp-292, which acts as the Proton donor.

The protein belongs to the UbiD family. In terms of assembly, homohexamer. Prenylated FMN is required as a cofactor. The cofactor is Mn(2+).

The protein resides in the cell membrane. It catalyses the reaction a 4-hydroxy-3-(all-trans-polyprenyl)benzoate + H(+) = a 2-(all-trans-polyprenyl)phenol + CO2. It functions in the pathway cofactor biosynthesis; ubiquinone biosynthesis. Functionally, catalyzes the decarboxylation of 3-octaprenyl-4-hydroxy benzoate to 2-octaprenylphenol, an intermediate step in ubiquinone biosynthesis. This chain is 3-octaprenyl-4-hydroxybenzoate carboxy-lyase, found in Neisseria meningitidis serogroup C / serotype 2a (strain ATCC 700532 / DSM 15464 / FAM18).